Consider the following 627-residue polypeptide: Pentatricopeptide repeat-containing protein At2g35030, mitochondrial (627 aa).

A mitochondrion-targeting transit peptide spans 1–44 (MQSRALSRLRSYYKRSSVFPSSDNDRSVQLFNLVRSIYSSSSRP). 14 PPR repeats span residues 45–75 (RVPQ…LPER), 76–110 (DVVT…KNVV), 111–138 (TWTA…MPER), 139–173 (NVVS…NIVS), 174–200 (WNSM…MPRR), 201–235 (DVVS…NIIS), 236–262 (WNAM…MPER), 263–293 (DFAS…MPEK), 294–328 (NVIS…GSVK), 330–360 (NVGT…ISKS), 365–396 (NEIV…LVCQ), 398–432 (DLIS…GFKP), 433–467 (SAVT…ESLP), and 469–499 (REEH…DDAR). Residues 504–579 (FYGAILSACN…QPGCSWVKVG (76 aa)) are type E motif. Positions 580 to 610 (KQNHLFVVGDKSHPQFEALDSILSDLRNKMR) are type E(+) motif.

Belongs to the PPR family. PCMP-E subfamily.

Its subcellular location is the mitochondrion. The sequence is that of Pentatricopeptide repeat-containing protein At2g35030, mitochondrial (PCMP-E15) from Arabidopsis thaliana (Mouse-ear cress).